A 410-amino-acid chain; its full sequence is Polyprenol-phosphate-mannose-dependent alpha-(1-2)-phosphatidylinositol pentamannoside mannosyltransferase (410 aa).

10 helical membrane passes run 31–51, 96–116, 160–180, 188–208, 214–234, 276–296, 306–326, 328–348, 351–371, and 384–404; these read LAPM…YLVP, FAAI…AFIW, TFDY…AVST, LLVG…LYFL, AAVA…WLVV, GFGP…LLAW, LGGI…SWTH, WVWL…ALRG, ILGW…LSFA, and LAWA…WIAF.

The protein belongs to the glycosyltransferase 87 family.

It localises to the cell membrane. It participates in phospholipid metabolism; phosphatidylinositol metabolism. In terms of biological role, catalyzes the alpha-1,2 addition of a mannose residue from polyprenol-phosphate-mannose (PPM) to a monoacyl phosphatidylinositol tetramannoside (AcPIM4) to generate a monoacyl phosphatidylinositol pentamannoside (AcPIM5). The sequence is that of Polyprenol-phosphate-mannose-dependent alpha-(1-2)-phosphatidylinositol pentamannoside mannosyltransferase from Mycolicibacterium smegmatis (strain ATCC 700084 / mc(2)155) (Mycobacterium smegmatis).